The sequence spans 437 residues: Vitellogenin-1 (437 aa).

An N-terminal signal peptide occupies residues M1–A19. Disordered regions lie at residues Q161–K194 and P405–E437. 2 stretches are compositionally biased toward polar residues: residues G174–S184 and S427–E437.

Belongs to the AB hydrolase superfamily. Lipase family. As to expression, synthesized in the fat body and ovarian follicle cells and accumulate in the oocyte.

Its subcellular location is the secreted. Its function is as follows. Vitellogenin is the major yolk protein of eggs where it is used as a food source during embryogenesis. The protein is Vitellogenin-1 (VG1-GAMMA) of Ceratitis capitata (Mediterranean fruit fly).